The primary structure comprises 565 residues: Nephrocystin-1 (565 aa).

The segment covering 1–32 has biased composition (acidic residues); the sequence is GEEEDEEEEEEEESEEGGGEEEESEEEEEEKQ. 2 disordered regions span residues 1–46 and 95–132; these read GEEE…KEYI and VEPY…KQRT. Residues 2–48 are a coiled coil; it reads EEEDEEEEEEEESEEGGGEEEESEEEEEEKQENESHHQATSKEYIAV. Ser14 is subject to Phosphoserine. In terms of domain architecture, SH3 spans 40-100; the sequence is ATSKEYIAVG…PRTYVEPYNK (61 aa). The segment covering 104–118 has biased composition (acidic residues); sequence QDTSEEEDSEEDVEV. Residue Tyr182 is modified to Phosphotyrosine; by FAK2. Tyr554 is modified (phosphotyrosine; by SRC).

This sequence belongs to the nephrocystin-1 family. In terms of assembly, interacts with Crk-associated substrate BCAR1, NPHP4, PTK2B/PYK2 and tensin. Interacts with INVS and NPHP3. Interacts with AHI1 and TNK2. Interacts with NPHP4 in a complex containing NPHP1, NPHP4 and RPGRIP1L/NPHP8. Interacts with IQCB1; the interaction likely requires additional interactors. Interacts with KIF7. Interacts with ANKS3. Interacts with SPATA7. Interacts with FLNA. Expressed in renal cells (at protein level).

Its subcellular location is the cell junction. It is found in the adherens junction. It localises to the cell projection. The protein resides in the cilium. The protein localises to the cytoplasm. Its subcellular location is the cytoskeleton. It is found in the cilium axoneme. It localises to the tight junction. Functionally, together with BCAR1 it may play a role in the control of epithelial cell polarity. Involved in the organization of apical junctions in kidney cells together with NPHP4 and RPGRIP1L/NPHP8. Does not seem to be strictly required for ciliogenesis. Seems to help to recruit PTK2B/PYK2 to cell matrix adhesions, thereby initiating phosphorylation of PTK2B/PYK2 and PTK2B/PYK2-dependent signaling. May play a role in the regulation of intraflagellar transport (IFT) during cilia assembly. Required for normal retina development. In connecting photoreceptor cilia influences the movement of some IFT proteins such as IFT88 and WDR19. Involved in spermatogenesis. This Canis lupus familiaris (Dog) protein is Nephrocystin-1 (NPHP1).